We begin with the raw amino-acid sequence, 338 residues long: Glycerol-3-phosphate dehydrogenase [NAD(P)+] 1 (338 aa).

Ser-11, Trp-12, His-32, Arg-33, and Lys-109 together coordinate NADPH. Sn-glycerol 3-phosphate contacts are provided by Lys-109, Gly-140, and Ser-142. Residue Ala-144 participates in NADPH binding. The sn-glycerol 3-phosphate site is built by Lys-195, Asp-248, Ser-258, Arg-259, and Asn-260. Lys-195 (proton acceptor) is an active-site residue. NADPH is bound at residue Arg-259. Positions 283 and 285 each coordinate NADPH.

The protein belongs to the NAD-dependent glycerol-3-phosphate dehydrogenase family.

It localises to the cytoplasm. The catalysed reaction is sn-glycerol 3-phosphate + NAD(+) = dihydroxyacetone phosphate + NADH + H(+). It carries out the reaction sn-glycerol 3-phosphate + NADP(+) = dihydroxyacetone phosphate + NADPH + H(+). Its pathway is membrane lipid metabolism; glycerophospholipid metabolism. In terms of biological role, catalyzes the reduction of the glycolytic intermediate dihydroxyacetone phosphate (DHAP) to sn-glycerol 3-phosphate (G3P), the key precursor for phospholipid synthesis. The polypeptide is Glycerol-3-phosphate dehydrogenase [NAD(P)+] 1 (Lactobacillus delbrueckii subsp. bulgaricus (strain ATCC 11842 / DSM 20081 / BCRC 10696 / JCM 1002 / NBRC 13953 / NCIMB 11778 / NCTC 12712 / WDCM 00102 / Lb 14)).